A 239-amino-acid polypeptide reads, in one-letter code: Cyclo(L-leucyl-L-phenylalanyl) synthase (239 aa).

Ser37 functions as the Nucleophile in the catalytic mechanism. Substrate contacts are provided by residues Asn40, 178-182 (YVLAE), and Tyr202.

It belongs to the CDPS family. In terms of assembly, monomer.

It catalyses the reaction L-phenylalanyl-tRNA(Phe) + L-leucyl-tRNA(Leu) = cyclo(L-phenylalanyl-L-leucyl) + tRNA(Phe) + tRNA(Leu) + H(+). In terms of biological role, involved in the biosynthesis of albonoursin (cyclo[(alpha,beta-dehydro-Phe)-(alpha,beta-dehydro-Leu)]), an antibacterial peptide. It uses activated amino acids in the form of aminoacyl-tRNAs (aa-tRNAs) as substrates to catalyze the ATP-independent formation of cyclodipeptides which are intermediates in diketopiperazine (DKP) biosynthetic pathways. Catalyzes the formation of cyclo(L-Phe-L-Leu) (cFL) as major products from L-L-phenylalanyl-tRNA(Phe) and L-leucyl-tRNA(Leu). AlbC can also incorporate various nonpolar residues, such as L-phenylalanine, L-leucine, L-tyrosine and L-methionine, and to a much lesser extent L-alanine and L-valine, into cyclodipeptides. Indeed, ten possible cyclodipeptides composed of L-phenylalanine, L-leucine, L-tyrosine and L-methionine are all synthesized to detectable amounts by AlbC. This is Cyclo(L-leucyl-L-phenylalanyl) synthase (albC) from Streptomyces noursei (Streptomyces albulus).